We begin with the raw amino-acid sequence, 231 residues long: Ribosyldihydronicotinamide dehydrogenase [quinone] (231 aa).

FAD contacts are provided by residues H12, 18-21, and 104-107; these read FNGS and LYWF. 127-129 provides a ligand contact to substrate; it reads FDV. FAD-binding positions include 148 to 151 and Y156; that span reads TTGG. Positions 174 and 178 each coordinate Zn(2+). E194 is a binding site for FAD. S197 is subject to Phosphoserine. R201 is a binding site for FAD. C223 contributes to the Zn(2+) binding site.

The protein belongs to the NAD(P)H dehydrogenase (quinone) family. In terms of assembly, homodimer. Requires Zn(2+) as cofactor. It depends on FAD as a cofactor.

The protein localises to the cytoplasm. It carries out the reaction 1-(beta-D-ribofuranosyl)-1,4-dihydronicotinamide + a quinone + H(+) = beta-nicotinamide D-riboside + a quinol. The enzyme apparently serves as a quinone reductase in connection with conjugation reactions of hydroquinones involved in detoxification pathways as well as in biosynthetic processes such as the vitamin K-dependent gamma-carboxylation of glutamate residues in prothrombin synthesis. The chain is Ribosyldihydronicotinamide dehydrogenase [quinone] (Nqo2) from Rattus norvegicus (Rat).